Reading from the N-terminus, the 325-residue chain is Quinolinate synthase (325 aa).

Positions 41 and 58 each coordinate iminosuccinate. A [4Fe-4S] cluster-binding site is contributed by C103. Iminosuccinate contacts are provided by residues 129–131 and S146; that span reads YIN. C189 provides a ligand contact to [4Fe-4S] cluster. Residues 215–217 and T232 contribute to the iminosuccinate site; that span reads HPE. Residue C282 participates in [4Fe-4S] cluster binding.

This sequence belongs to the quinolinate synthase family. Type 2 subfamily. The cofactor is [4Fe-4S] cluster.

It localises to the cytoplasm. The enzyme catalyses iminosuccinate + dihydroxyacetone phosphate = quinolinate + phosphate + 2 H2O + H(+). The protein operates within cofactor biosynthesis; NAD(+) biosynthesis; quinolinate from iminoaspartate: step 1/1. Functionally, catalyzes the condensation of iminoaspartate with dihydroxyacetone phosphate to form quinolinate. This Rippkaea orientalis (strain PCC 8801 / RF-1) (Cyanothece sp. (strain PCC 8801)) protein is Quinolinate synthase.